The following is an 85-amino-acid chain: uncharacterized protein (85 aa).

A run of 2 helical transmembrane segments spans residues 20-42 (IYWFFCLYYKDGPILYTIYTTFL) and 52-69 (IILRNTVAFLSFMYKHYY).

Its subcellular location is the membrane. This is an uncharacterized protein from Saccharomyces cerevisiae (strain ATCC 204508 / S288c) (Baker's yeast).